The following is a 146-amino-acid chain: uncharacterized protein (146 aa).

This is an uncharacterized protein from Saccharomyces cerevisiae (strain ATCC 204508 / S288c) (Baker's yeast).